The chain runs to 276 residues: Small ribosomal subunit protein uS2 (276 aa).

The disordered stretch occupies residues 254–276 (LAGATAAAPAEGAVATETTPTEG). The span at 255-276 (AGATAAAPAEGAVATETTPTEG) shows a compositional bias: low complexity.

It belongs to the universal ribosomal protein uS2 family.

The polypeptide is Small ribosomal subunit protein uS2 (Mycobacterium ulcerans (strain Agy99)).